The following is an 89-amino-acid chain: DNA/RNA-binding protein Alba (89 aa).

K11 carries the post-translational modification N6-acetyllysine.

Belongs to the histone-like Alba family. In terms of processing, acetylated. Acetylation at Lys-11 decreases DNA-binding affinity.

The protein localises to the cytoplasm. The protein resides in the chromosome. Binds double-stranded DNA tightly but without sequence specificity. Involved in DNA compaction. This Thermoplasma volcanium (strain ATCC 51530 / DSM 4299 / JCM 9571 / NBRC 15438 / GSS1) protein is DNA/RNA-binding protein Alba.